The primary structure comprises 704 residues: Protein NBR1 homolog (704 aa).

Met-1 is modified (N-acetylmethionine). Residues 7–92 enclose the PB1 domain; that stretch reads ALVVKVSYGG…KFLKINVNAG (86 aa). Polar residues-rich tracts occupy residues 95–108, 171–189, and 223–233; these read TNSA…SSTP, PQES…SGAS, and HSKTSGHVPNS. 2 disordered regions span residues 95-114 and 171-233; these read TNSA…MPNP and PQES…VPNS. The segment at 286–336 adopts a ZZ-type; degenerate zinc-finger fold; that stretch reads HKGIRCDGCGVLPITGPRFKSKVKEDYDLCTICYSVMGNEGDYTRMDKPVS. 4 residues coordinate Zn(2+): Cys-291, Cys-294, Cys-315, and Cys-318. The UBA domain maps to 657–701; the sequence is GVSEWDPILEELQEMGFCDDVTNKRLLKKNNGSIKGVVMDLLTGE. Positions 661-664 match the LIR motif; that stretch reads WDPI.

Homodimer. Interacts with ATG8A, ATG8B, ATG8C, ATG8D, ATG8F and ATG8I. Binds to ubiquitin.

The protein localises to the cytoplasm. Its subcellular location is the vacuole. In terms of biological role, autophagic substrate degraded in the vacuole by non-selective autophagy. Requires ATG8 protein expression to be recognized as an autophagic substrate. Acts probably as a receptor for autophagosomal degradation of ubiquitinated proteins. Targets ubiquitinated protein aggregates derived from denatured or damaged non-native proteins generated under stress conditions. Functions additively with the E3 ubiquitin-protein ligase CHIP for autophagosomal degradation of proteotoxic aggregates formed under stress conditions. This is Protein NBR1 homolog from Arabidopsis thaliana (Mouse-ear cress).